Consider the following 338-residue polypeptide: Nuclear hormone receptor family member nhr-108 (338 aa).

The nuclear receptor DNA-binding region spans 7–82; it reads NQPCMVCGEI…IGMLEKVVAS (76 aa). The NR C4-type zinc finger occupies 10–30; it reads CMVCGEISYSIRFGAVSCRAC. The NR C4-type; degenerate zinc-finger motif lies at 46–65; sequence KRCNGACDLGKYHRKTCQSC. Positions 92–338 constitute an NR LBD domain; the sequence is NNQTILSGLE…QCPLYEATNE (247 aa).

Belongs to the nuclear hormone receptor family.

It localises to the nucleus. In terms of biological role, orphan nuclear receptor. This is Nuclear hormone receptor family member nhr-108 (nhr-108) from Caenorhabditis elegans.